A 230-amino-acid chain; its full sequence is Cytochrome c oxidase subunit 2 (230 aa).

Over 1-14 (MAHPTQLGFQDAAS) the chain is Mitochondrial intermembrane. A helical transmembrane segment spans residues 15–45 (PVMEELLHFHDHALMIVFLISTLVLYIIIAM). Residues 46–59 (VSTKLTNKYILDSQ) lie on the Mitochondrial matrix side of the membrane. Residues 60 to 87 (EIEIVWTILPAVILVLIALPSLRILYLM) traverse the membrane as a helical segment. Topologically, residues 88–230 (DEINDPHLTI…NWSSLMLEDA (143 aa)) are mitochondrial intermembrane. The Cu cation site is built by His161, Cys196, Glu198, Cys200, His204, and Met207. Glu198 contacts Mg(2+).

This sequence belongs to the cytochrome c oxidase subunit 2 family. As to quaternary structure, component of the cytochrome c oxidase (complex IV, CIV), a multisubunit enzyme composed of 14 subunits. The complex is composed of a catalytic core of 3 subunits MT-CO1, MT-CO2 and MT-CO3, encoded in the mitochondrial DNA, and 11 supernumerary subunits COX4I, COX5A, COX5B, COX6A, COX6B, COX6C, COX7A, COX7B, COX7C, COX8 and NDUFA4, which are encoded in the nuclear genome. The complex exists as a monomer or a dimer and forms supercomplexes (SCs) in the inner mitochondrial membrane with NADH-ubiquinone oxidoreductase (complex I, CI) and ubiquinol-cytochrome c oxidoreductase (cytochrome b-c1 complex, complex III, CIII), resulting in different assemblies (supercomplex SCI(1)III(2)IV(1) and megacomplex MCI(2)III(2)IV(2)). Found in a complex with TMEM177, COA6, COX18, COX20, SCO1 and SCO2. Interacts with TMEM177 in a COX20-dependent manner. Interacts with COX20. Interacts with COX16. The cofactor is Cu cation.

It localises to the mitochondrion inner membrane. It catalyses the reaction 4 Fe(II)-[cytochrome c] + O2 + 8 H(+)(in) = 4 Fe(III)-[cytochrome c] + 2 H2O + 4 H(+)(out). Component of the cytochrome c oxidase, the last enzyme in the mitochondrial electron transport chain which drives oxidative phosphorylation. The respiratory chain contains 3 multisubunit complexes succinate dehydrogenase (complex II, CII), ubiquinol-cytochrome c oxidoreductase (cytochrome b-c1 complex, complex III, CIII) and cytochrome c oxidase (complex IV, CIV), that cooperate to transfer electrons derived from NADH and succinate to molecular oxygen, creating an electrochemical gradient over the inner membrane that drives transmembrane transport and the ATP synthase. Cytochrome c oxidase is the component of the respiratory chain that catalyzes the reduction of oxygen to water. Electrons originating from reduced cytochrome c in the intermembrane space (IMS) are transferred via the dinuclear copper A center (CU(A)) of subunit 2 and heme A of subunit 1 to the active site in subunit 1, a binuclear center (BNC) formed by heme A3 and copper B (CU(B)). The BNC reduces molecular oxygen to 2 water molecules using 4 electrons from cytochrome c in the IMS and 4 protons from the mitochondrial matrix. The polypeptide is Cytochrome c oxidase subunit 2 (mt-co2) (Carassius auratus (Goldfish)).